We begin with the raw amino-acid sequence, 340 residues long: Meiotic recombination protein DMC1/LIM15 homolog (340 aa).

126-133 lines the ATP pocket; sequence GEFRTGKT. Arg230 provides a ligand contact to dsDNA. Positions 230, 233, 236, 242, and 311 each coordinate ssDNA. Arg236 and Arg242 together coordinate dsDNA.

The protein belongs to the RecA family. DMC1 subfamily. In terms of assembly, double stacked ring-shaped homooctamer. Interacts with BRCA2. Interacts with the MND1-PSMC3IP heterodimer. Interacts with RAD51AP1; the interaction is direct and stimulates DMC1-mediated homologous recombination. Testis.

The protein resides in the nucleus. The protein localises to the chromosome. Its function is as follows. Participates in meiotic recombination, specifically in homologous strand assimilation, which is required for the resolution of meiotic double-strand breaks. This chain is Meiotic recombination protein DMC1/LIM15 homolog, found in Mus musculus (Mouse).